Here is a 243-residue protein sequence, read N- to C-terminus: Probable transcriptional regulatory protein BH0025 (243 aa).

This sequence belongs to the TACO1 family.

It is found in the cytoplasm. The protein is Probable transcriptional regulatory protein BH0025 of Borrelia hermsii (strain HS1 / DAH).